The following is a 270-amino-acid chain: Gap junction beta-3 protein (270 aa).

At Met1–Phe20 the chain is on the cytoplasmic side. The chain crosses the membrane as a helical span at residues Gly21–Ala40. The Extracellular portion of the chain corresponds to Glu41–Arg75. The chain crosses the membrane as a helical span at residues Leu76–Arg98. Over Glu99–Gly126 the chain is Cytoplasmic. A helical membrane pass occupies residues Leu127–Leu149. Over His150–Phe187 the chain is Extracellular. The helical transmembrane segment at Thr188 to Ile210 threads the bilayer. Residues Cys211–Ile270 are Cytoplasmic-facing. Residues Glu250–Ile270 are disordered. Residues Asn258–Ile270 are compositionally biased toward polar residues.

Belongs to the connexin family. Beta-type (group I) subfamily. As to quaternary structure, a connexon is composed of a hexamer of connexins. Interacts with CNST.

The protein resides in the cell membrane. It is found in the cell junction. It localises to the gap junction. Functionally, one gap junction consists of a cluster of closely packed pairs of transmembrane channels, the connexons, through which materials of low MW diffuse from one cell to a neighboring cell. The sequence is that of Gap junction beta-3 protein (GJB3) from Homo sapiens (Human).